A 177-amino-acid chain; its full sequence is B-phycoerythrin beta chain (177 aa).

Residues cysteine 50 and cysteine 61 each coordinate phycourobilin. Asparagine 72 carries the N4-methylasparagine modification. (2R,3E)-phycoerythrobilin contacts are provided by cysteine 82 and cysteine 158.

This sequence belongs to the phycobiliprotein family. Heteromer of 6 alpha, 6 beta and one gamma chain. In terms of processing, contains two covalently linked phycoerythrobilin chromophores and one covalently linked phycourobilin chromophore.

It localises to the plastid. The protein resides in the chloroplast thylakoid membrane. Functionally, light-harvesting photosynthetic bile pigment-protein from the phycobiliprotein complex. The sequence is that of B-phycoerythrin beta chain (cpeB) from Rhodella violacea (Red alga).